The sequence spans 154 residues: Probable chemoreceptor glutamine deamidase CheD (154 aa).

It belongs to the CheD family.

It carries out the reaction L-glutaminyl-[protein] + H2O = L-glutamyl-[protein] + NH4(+). In terms of biological role, probably deamidates glutamine residues to glutamate on methyl-accepting chemotaxis receptors (MCPs), playing an important role in chemotaxis. The protein is Probable chemoreceptor glutamine deamidase CheD of Methanococcus vannielii (strain ATCC 35089 / DSM 1224 / JCM 13029 / OCM 148 / SB).